We begin with the raw amino-acid sequence, 335 residues long: Large ribosomal subunit protein uL3 (335 aa).

This sequence belongs to the universal ribosomal protein uL3 family. In terms of assembly, part of the 50S ribosomal subunit. Forms a cluster with proteins L14 and L24e.

One of the primary rRNA binding proteins, it binds directly near the 3'-end of the 23S rRNA, where it nucleates assembly of the 50S subunit. In Methanocaldococcus jannaschii (strain ATCC 43067 / DSM 2661 / JAL-1 / JCM 10045 / NBRC 100440) (Methanococcus jannaschii), this protein is Large ribosomal subunit protein uL3.